Here is a 603-residue protein sequence, read N- to C-terminus: DNA mismatch repair protein MutL (603 aa).

It belongs to the DNA mismatch repair MutL/HexB family.

Functionally, this protein is involved in the repair of mismatches in DNA. It is required for dam-dependent methyl-directed DNA mismatch repair. May act as a 'molecular matchmaker', a protein that promotes the formation of a stable complex between two or more DNA-binding proteins in an ATP-dependent manner without itself being part of a final effector complex. The protein is DNA mismatch repair protein MutL of Nitrobacter hamburgensis (strain DSM 10229 / NCIMB 13809 / X14).